The chain runs to 517 residues: Pentatricopeptide repeat-containing protein At1g77360, mitochondrial (517 aa).

Residues 1 to 59 (MKRFRIRSVDFRQLVNFFSFMRWECSSSATVWVRFNMTIRIINRQSRFCCKSFLSARLY) constitute a mitochondrion transit peptide. PPR repeat units lie at residues 133-163 (SVRA…MRKK), 167-201 (NVET…DLPP), 202-232 (NLVA…MRDR), 236-270 (DSKT…GCHP), 271-305 (DIVT…ICKP), 306-340 (TTFI…GMKA), 341-375 (DVAV…GVTP), 376-406 (NSKS…MIKV), 410-444 (DADT…GVFP), and 445-479 (SMHT…GIRP).

The protein belongs to the PPR family. P subfamily.

Its subcellular location is the mitochondrion. This Arabidopsis thaliana (Mouse-ear cress) protein is Pentatricopeptide repeat-containing protein At1g77360, mitochondrial.